Reading from the N-terminus, the 103-residue chain is Pyrimidine/purine nucleoside phosphorylase (103 aa).

Belongs to the nucleoside phosphorylase PpnP family.

It catalyses the reaction a purine D-ribonucleoside + phosphate = a purine nucleobase + alpha-D-ribose 1-phosphate. It carries out the reaction adenosine + phosphate = alpha-D-ribose 1-phosphate + adenine. The catalysed reaction is cytidine + phosphate = cytosine + alpha-D-ribose 1-phosphate. The enzyme catalyses guanosine + phosphate = alpha-D-ribose 1-phosphate + guanine. It catalyses the reaction inosine + phosphate = alpha-D-ribose 1-phosphate + hypoxanthine. It carries out the reaction thymidine + phosphate = 2-deoxy-alpha-D-ribose 1-phosphate + thymine. The catalysed reaction is uridine + phosphate = alpha-D-ribose 1-phosphate + uracil. The enzyme catalyses xanthosine + phosphate = alpha-D-ribose 1-phosphate + xanthine. In terms of biological role, catalyzes the phosphorolysis of diverse nucleosides, yielding D-ribose 1-phosphate and the respective free bases. Can use uridine, adenosine, guanosine, cytidine, thymidine, inosine and xanthosine as substrates. Also catalyzes the reverse reactions. This chain is Pyrimidine/purine nucleoside phosphorylase, found in Shewanella denitrificans (strain OS217 / ATCC BAA-1090 / DSM 15013).